A 202-amino-acid polypeptide reads, in one-letter code: MAELENPSVMSKLIAFLSSLLERVAESNDLTRRVATQSQRVSVFHGLSRPTITIQSYLERIFKYANCSPSCFVVAYVYLDRFTHRQPSLPINSFNVHRLLITSVMVAAKFLDDLYYNNAYYAKVGGISTKEMNFLELDFLFGLGFELNVTPNTFNAYFSYLQKEMTLLQPLSLVVVPSSRSLITFNDDEASHQKQQQQQLAV.

Belongs to the cyclin family. Cyclin U/P subfamily. As to quaternary structure, interacts with CDKA-1. Expressed in roots, stems and flowers. Expressed in the shoot apex, leaf primordia and young leaves.

This is Cyclin-U4-1 (CYCU4-1) from Arabidopsis thaliana (Mouse-ear cress).